Here is a 697-residue protein sequence, read N- to C-terminus: Semaphorin-2A (697 aa).

The N-terminal stretch at 1-20 (MAAKLWNLLLVAASVHLVGS) is a signal peptide. Residues 21-493 (VEQLHQDLIH…SDNIVRQIEL (473 aa)) enclose the Sema domain. N-linked (GlcNAc...) asparagine glycans are attached at residues asparagine 63 and asparagine 66. Residues cysteine 87 and cysteine 98 are joined by a disulfide bond. N-linked (GlcNAc...) asparagine glycans are attached at residues asparagine 132, asparagine 198, and asparagine 283. Cystine bridges form between cysteine 260-cysteine 367 and cysteine 284-cysteine 326. Asparagine 369 is a glycosylation site (N-linked (GlcNAc...) asparagine). 2 disulfide bridges follow: cysteine 496-cysteine 512 and cysteine 506-cysteine 521. The Ig-like C2-type domain maps to 526-634 (PGLLQDVTNT…LCSYNITVDA (109 aa)). N-linked (GlcNAc...) asparagine glycans are attached at residues asparagine 534, asparagine 629, and asparagine 679. A disulfide bridge links cysteine 618 with cysteine 654. A compositionally biased stretch (polar residues) spans 673–685 (QCSTKQNNSNQKT). The segment at 673–697 (QCSTKQNNSNQKTHPNDIFHSNPVA) is disordered.

This sequence belongs to the semaphorin family. In terms of tissue distribution, expressed in a gradient in the developing limb bud epithelium during Ti pioneer axon outgrowth.

It is found in the secreted. Functionally, acts as a chemorepulsive guidance molecule critical for axon fasciculation and for determining both the initial direction and subsequent pathfinding events of the Ti axon projection. The protein is Semaphorin-2A (SEMA-2A) of Schistocerca gregaria (Desert locust).